Consider the following 138-residue polypeptide: Small ribosomal subunit protein uS11c (138 aa).

The disordered stretch occupies residues 1–23 (MAKPILRIGSRKNTRSGSRKNVR). The span at 9–23 (GSRKNTRSGSRKNVR) shows a compositional bias: basic residues.

The protein belongs to the universal ribosomal protein uS11 family. As to quaternary structure, part of the 30S ribosomal subunit.

It is found in the plastid. It localises to the chloroplast. This chain is Small ribosomal subunit protein uS11c, found in Aethionema grandiflorum (Persian stone-cress).